We begin with the raw amino-acid sequence, 78 residues long: Acyl carrier protein (78 aa).

Residues 2–77 (SNIEDRVRKI…AAIDYVNSAS (76 aa)) enclose the Carrier domain. At serine 37 the chain carries O-(pantetheine 4'-phosphoryl)serine.

The protein belongs to the acyl carrier protein (ACP) family. In terms of processing, 4'-phosphopantetheine is transferred from CoA to a specific serine of apo-ACP by AcpS. This modification is essential for activity because fatty acids are bound in thioester linkage to the sulfhydryl of the prosthetic group.

Its subcellular location is the cytoplasm. It participates in lipid metabolism; fatty acid biosynthesis. Carrier of the growing fatty acid chain in fatty acid biosynthesis. The protein is Acyl carrier protein of Photobacterium profundum (strain SS9).